The sequence spans 129 residues: V-type proton ATPase subunit F 2 (129 aa).

The protein belongs to the V-ATPase F subunit family. V-ATPase is a heteromultimeric enzyme made up of two complexes: the ATP-hydrolytic V1 complex and the proton translocation V0 complex. The V1 complex consists of three catalytic AB heterodimers that form a heterohexamer, three peripheral stalks each consisting of EG heterodimers, one central rotor including subunits D and F, and the regulatory subunits C and H. The proton translocation complex V0 consists of the proton transport subunit a, a ring of proteolipid subunits c9c'', rotary subunit d, subunits e and f, and the accessory subunits VhaAC45 and ATP6AP2.

Functionally, subunit of the V1 complex of vacuolar(H+)-ATPase (V-ATPase), a multisubunit enzyme composed of a peripheral complex (V1) that hydrolyzes ATP and a membrane integral complex (V0) that translocates protons. V-ATPase is responsible for acidifying and maintaining the pH of intracellular compartments and in some cell types, is targeted to the plasma membrane, where it is responsible for acidifying the extracellular environment. This chain is V-type proton ATPase subunit F 2 (Vha14-2), found in Drosophila melanogaster (Fruit fly).